A 960-amino-acid chain; its full sequence is UPF0182 protein DSY1630 (960 aa).

7 helical membrane-spanning segments follow: residues 7–27, 50–70, 105–125, 169–189, 212–232, 256–276, and 285–305; these read IMLV…GLFE, IIQI…LFSI, TLWL…VTGF, FGPL…AGVI, LALL…FDTF, ALKA…LAFF, and LPIL…PMVL. Disordered stretches follow at residues 866 to 899 and 924 to 960; these read SALA…QEDT and TGDS…KTNP. Residues 881-897 are compositionally biased toward acidic residues; it reads ETEETTEETEEPVDPQE. A compositionally biased stretch (basic and acidic residues) spans 931–944; that stretch reads EGGKKADEDAHDVQ. Residues 950-960 show a composition bias toward polar residues; the sequence is SVSSEQSKTNP.

It belongs to the UPF0182 family.

Its subcellular location is the cell membrane. The polypeptide is UPF0182 protein DSY1630 (Desulfitobacterium hafniense (strain Y51)).